Here is a 122-residue protein sequence, read N- to C-terminus: Large ribosomal subunit protein uL14 (122 aa).

It belongs to the universal ribosomal protein uL14 family. Part of the 50S ribosomal subunit. Forms a cluster with proteins L3 and L19. In the 70S ribosome, L14 and L19 interact and together make contacts with the 16S rRNA in bridges B5 and B8.

Functionally, binds to 23S rRNA. Forms part of two intersubunit bridges in the 70S ribosome. The protein is Large ribosomal subunit protein uL14 of Rhodopseudomonas palustris (strain HaA2).